Reading from the N-terminus, the 325-residue chain is MSIALDSSTATAAAAPSPTRARIAALLALPLPELIFQAQTVHRQHFDPTQVQISTLLSIKTGGCPEDCGYCPQSAEFDVGVKASKLMDIAPVLEAARRAKEAGAQRFCMGAAWRSPKDHDLDRVAAMVEGVKALGMETCVTLGMLRPDQAARLKSAGLDYYNHNLDTSPEFYGSIITTRTYQDRLDTLAAVRDAGINICCGGIIGMGEDLDDRAGLLATLADLDPPPESVPINALVAVKGTKLGESAPIDPIDFVRTIAAARISMPRSWVRLSAGREALSDEAQALCFLAGANSIFYGDTLLTTANPAVARDNALFDRLGMTKLS.

The Radical SAM core domain maps to T49 to R267. C64, C68, and C71 together coordinate [4Fe-4S] cluster. Positions 108, 139, 199, and 271 each coordinate [2Fe-2S] cluster.

This sequence belongs to the radical SAM superfamily. Biotin synthase family. As to quaternary structure, homodimer. [4Fe-4S] cluster serves as cofactor. The cofactor is [2Fe-2S] cluster.

The enzyme catalyses (4R,5S)-dethiobiotin + (sulfur carrier)-SH + 2 reduced [2Fe-2S]-[ferredoxin] + 2 S-adenosyl-L-methionine = (sulfur carrier)-H + biotin + 2 5'-deoxyadenosine + 2 L-methionine + 2 oxidized [2Fe-2S]-[ferredoxin]. It functions in the pathway cofactor biosynthesis; biotin biosynthesis; biotin from 7,8-diaminononanoate: step 2/2. In terms of biological role, catalyzes the conversion of dethiobiotin (DTB) to biotin by the insertion of a sulfur atom into dethiobiotin via a radical-based mechanism. The chain is Biotin synthase from Acidiphilium cryptum (strain JF-5).